Consider the following 428-residue polypeptide: GTPase Obg (428 aa).

Residues 1 to 158 (MFVDQVKIYV…RYIVLELKVL (158 aa)) enclose the Obg domain. Residues 118-143 (KGGRGGRGNTRFATPANPAPQLSENG) form a disordered region. One can recognise an OBG-type G domain in the interval 159–329 (ADVGLVGFPS…LLFEIADRLE (171 aa)). GTP is bound by residues 165-172 (GFPSVGKS), 190-194 (FTTLN), 212-215 (DLPG), 282-285 (NKMD), and 310-312 (SAV). Residues serine 172 and threonine 192 each coordinate Mg(2+). In terms of domain architecture, OCT spans 350-428 (KLEDEEAPFE…LLEFEFEFID (79 aa)).

It belongs to the TRAFAC class OBG-HflX-like GTPase superfamily. OBG GTPase family. In terms of assembly, monomer. The cofactor is Mg(2+).

It is found in the cytoplasm. Its function is as follows. An essential GTPase which binds GTP, GDP and possibly (p)ppGpp with moderate affinity, with high nucleotide exchange rates and a fairly low GTP hydrolysis rate. Plays a role in control of the cell cycle, stress response, ribosome biogenesis and in those bacteria that undergo differentiation, in morphogenesis control. In Bacillus licheniformis (strain ATCC 14580 / DSM 13 / JCM 2505 / CCUG 7422 / NBRC 12200 / NCIMB 9375 / NCTC 10341 / NRRL NRS-1264 / Gibson 46), this protein is GTPase Obg.